The primary structure comprises 105 residues: Circadian clock oscillator protein KaiB1 (105 aa).

Belongs to the KaiB family. As to quaternary structure, homotetramer in solution and crystals formed by 2 dimers. Only elutes as a homotetramer in size exclusion chromatography, interacts with KaiC1 and KaiC3. The KaiABC complex composition changes during the circadian cycle to control KaiC phosphorylation. Complexes KaiC(6), KaiA(2-4):KaiC(6), KaiB(6):KaiC(6) and KaiC(6):KaiB(6):KaiA(12) are among the most important forms, many form cooperatively. Undergoes a major conformational rearrangment; in the free state forms homotetramers as a dimer of dimers. When bound to the CI domain of KaiC switches to a monomeric thioredoxin-fold (KaiB(fs)). KaiB(fs) binds CikA, leading it to dephosphorylate phospho-RpaA.

Functionally, key component of the KaiABC oscillator complex, which constitutes the main circadian regulator in cyanobacteria. Complex composition changes during the circadian cycle to control KaiC phosphorylation. KaiA stimulates KaiC autophosphorylation, while KaiB sequesters KaiA, leading to KaiC autodephosphorylation. Phospho-Ser-431 KaiC accumulation triggers binding of KaiB to form the KaiB(6):KaiC(6) complex, leading to changes in output regulators CikA and SasA. KaiB switches to a thioredoxin-like fold (KaiB(fs)) when bound to KaiC. KaiB(6):KaiC(6) formation exposes a site for KaiA binding that sequesters KaiA from KaiC, making the KaiC(6):KaiB(6):KaiA(12) complex that results in KaiC autodephosphorylation. Component of the oscillator and circadian clock in this organism, enhances fitness in a rhythmic environment. The homotetramer reduces the ATPase activity of KaiC3 by 35%. Its function is as follows. A metamorphic protein which reversibly switches between an inactive tetrameric fold and a rare, thioredoxin-like monomeric fold (KaiB(fs)). KaiB(fs) binds phospho-KaiC, KaiA and CikA. KaiA and CikA compete for binding to KaiB(fs), and KaiB(fs) and SasA compete for binding to KaiC, thus the clock oscillator and output signal pathway are tightly coupled. This is Circadian clock oscillator protein KaiB1 from Synechocystis sp. (strain ATCC 27184 / PCC 6803 / Kazusa).